The following is a 240-amino-acid chain: uncharacterized protein (240 aa).

This is an uncharacterized protein from Methanocaldococcus jannaschii (strain ATCC 43067 / DSM 2661 / JAL-1 / JCM 10045 / NBRC 100440) (Methanococcus jannaschii).